The primary structure comprises 122 residues: Large ribosomal subunit protein uL14 (122 aa).

The protein belongs to the universal ribosomal protein uL14 family. In terms of assembly, part of the 50S ribosomal subunit. Forms a cluster with proteins L3 and L19. In the 70S ribosome, L14 and L19 interact and together make contacts with the 16S rRNA in bridges B5 and B8.

In terms of biological role, binds to 23S rRNA. Forms part of two intersubunit bridges in the 70S ribosome. The protein is Large ribosomal subunit protein uL14 of Hydrogenovibrio crunogenus (strain DSM 25203 / XCL-2) (Thiomicrospira crunogena).